A 180-amino-acid polypeptide reads, in one-letter code: ATP-dependent protease subunit HslV (180 aa).

The active site involves threonine 5. 3 residues coordinate Na(+): glycine 161, cysteine 164, and threonine 167.

This sequence belongs to the peptidase T1B family. HslV subfamily. A double ring-shaped homohexamer of HslV is capped on each side by a ring-shaped HslU homohexamer. The assembly of the HslU/HslV complex is dependent on binding of ATP.

Its subcellular location is the cytoplasm. It catalyses the reaction ATP-dependent cleavage of peptide bonds with broad specificity.. Allosterically activated by HslU binding. Functionally, protease subunit of a proteasome-like degradation complex believed to be a general protein degrading machinery. The chain is ATP-dependent protease subunit HslV from Campylobacter lari (strain RM2100 / D67 / ATCC BAA-1060).